Consider the following 153-residue polypeptide: uncharacterized protein (153 aa).

The segment at 1–88 is disordered; the sequence is MDKDRPGLPA…VPPPQLDHPG (88 aa).

This is an uncharacterized protein from Epstein-Barr virus (strain P3HR-1) (HHV-4).